Here is a 733-residue protein sequence, read N- to C-terminus: Photosystem I P700 chlorophyll a apoprotein A2 (733 aa).

8 helical membrane passes run 46–69 (IFAS…FHVA), 134–157 (LYLG…LHLQ), 174–198 (LNHH…HVAI), 272–290 (IAHH…GHMY), 329–352 (LHMQ…QHMY), 368–394 (AALY…IFFV), 416–438 (AIIS…LYIH), and 516–534 (FLVH…LILV). Residues Cys558 and Cys567 each contribute to the [4Fe-4S] cluster site. A run of 2 helical transmembrane segments spans residues 574–595 (AFYL…YWHW) and 642–664 (LSVW…MFLI). Chlorophyll a contacts are provided by His653, Met661, and Tyr669. Position 670 (Trp670) interacts with phylloquinone. The helical transmembrane segment at 706–726 (LVGLVHFTVGYVLTYAAFVIA) threads the bilayer.

Belongs to the PsaA/PsaB family. The PsaA/B heterodimer binds the P700 chlorophyll special pair and subsequent electron acceptors. PSI consists of a core antenna complex that captures photons, and an electron transfer chain that converts photonic excitation into a charge separation. The eukaryotic PSI reaction center is composed of at least 11 subunits. The cofactor is P700 is a chlorophyll a/chlorophyll a' dimer, A0 is one or more chlorophyll a, A1 is one or both phylloquinones and FX is a shared 4Fe-4S iron-sulfur center..

It is found in the plastid. The protein localises to the chloroplast thylakoid membrane. It carries out the reaction reduced [plastocyanin] + hnu + oxidized [2Fe-2S]-[ferredoxin] = oxidized [plastocyanin] + reduced [2Fe-2S]-[ferredoxin]. In terms of biological role, psaA and PsaB bind P700, the primary electron donor of photosystem I (PSI), as well as the electron acceptors A0, A1 and FX. PSI is a plastocyanin/cytochrome c6-ferredoxin oxidoreductase, converting photonic excitation into a charge separation, which transfers an electron from the donor P700 chlorophyll pair to the spectroscopically characterized acceptors A0, A1, FX, FA and FB in turn. Oxidized P700 is reduced on the lumenal side of the thylakoid membrane by plastocyanin or cytochrome c6. The protein is Photosystem I P700 chlorophyll a apoprotein A2 of Phaeodactylum tricornutum (strain CCAP 1055/1).